We begin with the raw amino-acid sequence, 106 residues long: Large ribosomal subunit protein P2 (106 aa).

Residues 79-106 (GAGAVAEAKKEEPEEEEADDDMGFGLFD) form a disordered region. The segment covering 91–100 (PEEEEADDDM) has biased composition (acidic residues).

Belongs to the eukaryotic ribosomal protein P1/P2 family. In terms of assembly, P1 and P2 exist as dimers at the large ribosomal subunit. Post-translationally, phosphorylated.

Its function is as follows. Plays an important role in the elongation step of protein synthesis. This Leishmania infantum protein is Large ribosomal subunit protein P2 (LIP).